The following is a 312-amino-acid chain: DNA-directed RNA polymerase subunit alpha (312 aa).

The alpha N-terminal domain (alpha-NTD) stretch occupies residues 1–229 (MLQYQIDRIE…ELFQPLATVT (229 aa)). The interval 239–312 (EPTAEAQIPL…IQIPQSRTSA (74 aa)) is alpha C-terminal domain (alpha-CTD).

This sequence belongs to the RNA polymerase alpha chain family. As to quaternary structure, in cyanobacteria the RNAP catalytic core is composed of 2 alpha, 1 beta, 1 beta', 1 gamma and 1 omega subunit. When a sigma factor is associated with the core the holoenzyme is formed, which can initiate transcription.

The catalysed reaction is RNA(n) + a ribonucleoside 5'-triphosphate = RNA(n+1) + diphosphate. DNA-dependent RNA polymerase catalyzes the transcription of DNA into RNA using the four ribonucleoside triphosphates as substrates. The chain is DNA-directed RNA polymerase subunit alpha from Synechococcus sp. (strain WH7803).